Here is a 611-residue protein sequence, read N- to C-terminus: MSRSPLHPIPLLSEGYQDTPAPLPPLLPPLQNPSSRSWASRVFGPSTWGLSCLLALQHFLVLASLLWASHLLLLHGLPPGGLSYPPAQLLASSFFSCGLSTVLQTWMGSRLPLIQAPSLEFLIPALVLTNQKLPLTTKTPGNASLSLPLCSLTRSCHGLELWNTSLREVSGAVVVSGLLQGTIGLLGVPGRVFPYCGPLVLAPSLVVAGLSAHKEVAQFCSAHWGLALLLILLMVVCSQHLGSCQIPLCSWRPSSTSTHICIPVFRLLSVLAPVACVWFISAFVGTSVIPLQLSEPSDAPWFWLPHPGEWEWPLLTPRALAAGISMALAASTSSLGCYALCGQLLRLSPPPPHACSRGLSLEGLGSVLAGLLGSPLGTASSFPNVGTVSLFQTGSRRVAHLVGLFCMGLGLSPRLAQLFTSIPLPVLGGVLGVTQAVVLSAGFSSFHLADIDSGRNVFIVGFSIFMALLLPRWLREAPVLLNTGWSPLDMFLRSLLAEPIFLAGLLGFLLENTISGTRAERGLGQRLPTSFTAQEIQMLQQSRRKAAQEYGLPLPIKNLCSCIPQPLHCLCPMPEDSGDEGGSSKTGERADLLPNSGESYSTASREGVRSQ.

Residues 1–52 are Cytoplasmic-facing; the sequence is MSRSPLHPIPLLSEGYQDTPAPLPPLLPPLQNPSSRSWASRVFGPSTWGLSC. Residues 53–73 traverse the membrane as a helical segment; the sequence is LLALQHFLVLASLLWASHLLL. Residues 74-88 lie on the Extracellular side of the membrane; sequence LHGLPPGGLSYPPAQ. A helical transmembrane segment spans residues 89–109; that stretch reads LLASSFFSCGLSTVLQTWMGS. At 110–168 the chain is on the cytoplasmic side; that stretch reads RLPLIQAPSLEFLIPALVLTNQKLPLTTKTPGNASLSLPLCSLTRSCHGLELWNTSLRE. A helical membrane pass occupies residues 169–189; sequence VSGAVVVSGLLQGTIGLLGVP. Over 190-191 the chain is Extracellular; the sequence is GR. The helical transmembrane segment at 192–212 threads the bilayer; sequence VFPYCGPLVLAPSLVVAGLSA. Topologically, residues 213-215 are cytoplasmic; that stretch reads HKE. The chain crosses the membrane as a helical span at residues 216 to 236; the sequence is VAQFCSAHWGLALLLILLMVV. The Extracellular portion of the chain corresponds to 237 to 269; it reads CSQHLGSCQIPLCSWRPSSTSTHICIPVFRLLS. Residues 270–290 form a helical membrane-spanning segment; the sequence is VLAPVACVWFISAFVGTSVIP. At 291–319 the chain is on the cytoplasmic side; it reads LQLSEPSDAPWFWLPHPGEWEWPLLTPRA. A helical transmembrane segment spans residues 320–340; it reads LAAGISMALAASTSSLGCYAL. Topologically, residues 341-358 are extracellular; it reads CGQLLRLSPPPPHACSRG. Residues 359-379 traverse the membrane as a helical segment; that stretch reads LSLEGLGSVLAGLLGSPLGTA. Residues 380 to 397 are Cytoplasmic-facing; the sequence is SSFPNVGTVSLFQTGSRR. Residues 398–417 traverse the membrane as a helical segment; sequence VAHLVGLFCMGLGLSPRLAQ. The Extracellular portion of the chain corresponds to 418–426; that stretch reads LFTSIPLPV. Residues 427–449 traverse the membrane as a helical segment; sequence LGGVLGVTQAVVLSAGFSSFHLA. Over 450-455 the chain is Cytoplasmic; that stretch reads DIDSGR. The chain crosses the membrane as a helical span at residues 456–475; the sequence is NVFIVGFSIFMALLLPRWLR. The Extracellular segment spans residues 476 to 489; it reads EAPVLLNTGWSPLD. Residues 490 to 510 form a helical membrane-spanning segment; that stretch reads MFLRSLLAEPIFLAGLLGFLL. Residues 511-611 are Cytoplasmic-facing; it reads ENTISGTRAE…TASREGVRSQ (101 aa). The tract at residues 574–611 is disordered; sequence PEDSGDEGGSSKTGERADLLPNSGESYSTASREGVRSQ. The segment covering 596–605 has biased composition (polar residues); it reads SGESYSTASR.

This sequence belongs to the nucleobase:cation symporter-2 (NCS2) (TC 2.A.40) family.

The protein resides in the membrane. It is found in the cytoplasm. It catalyses the reaction hypoxanthine(out) + Na(+)(out) = hypoxanthine(in) + Na(+)(in). Its function is as follows. Acts as a sodium-dependent hypoxanthine transporter. May show xanthine-hypoxanthine exchange activity. The chain is Solute carrier family 23 member 3 (Slc23a3) from Mus musculus (Mouse).